The primary structure comprises 149 residues: Pleckstrin homology domain-containing family J member 1 (149 aa).

The PH domain maps to 15–108 (PAEMAAELGM…WMEALRRASY (94 aa)).

As to expression, expressed in testis and liver.

The protein is Pleckstrin homology domain-containing family J member 1 (PLEKHJ1) of Homo sapiens (Human).